The sequence spans 337 residues: Putative high mobility group B protein 11 (337 aa).

In terms of domain architecture, ARID spans 34 to 125 (VRNPELFWEM…MLFEFEHLYY (92 aa)). Disordered regions lie at residues 197 to 221 (TKRG…QRTG) and 298 to 337 (AGTS…EVSQ). A DNA-binding region (HMG box) is located at residues 215 to 282 (PKRQRTGYNF…RYKMEILQYR (68 aa)). Residues 319 to 329 (TDACTSASSAA) show a composition bias toward low complexity.

It belongs to the HMGB family.

It is found in the nucleus. Binds preferentially DNA with A/T-rich content. The polypeptide is Putative high mobility group B protein 11 (HMGB11) (Arabidopsis thaliana (Mouse-ear cress)).